The sequence spans 432 residues: Neuronal pentraxin-2 (432 aa).

Residues 1-14 (MLALLTAGVALAVA) form the signal peptide. Residues Asn149 and Asn190 are each glycosylated (N-linked (GlcNAc...) asparagine). A Pentraxin (PTX) domain is found at 224–425 (DAFKVSLPLR…GASKWPVETC (202 aa)). The cysteines at positions 254 and 314 are disulfide-linked. Residues Asn278, Glu356, Gln357, Asp358, and Gln368 each coordinate Ca(2+). N-linked (GlcNAc...) asparagine glycosylation occurs at Asn394.

As to quaternary structure, homooligomer or heterooligomer (probably pentamer) with neuronal pentraxin receptor (NPTXR). The cofactor is Ca(2+).

Its subcellular location is the secreted. Likely to play role in the modification of cellular properties that underlie long-term plasticity. Binds to agar matrix in a calcium-dependent manner. This is Neuronal pentraxin-2 (Nptx2) from Rattus norvegicus (Rat).